We begin with the raw amino-acid sequence, 769 residues long: Trehalose 6-phosphate phosphorylase (769 aa).

342 to 343 is a binding site for substrate; that stretch reads WD. The active-site Proton donor is glutamate 480. 589–590 contacts substrate; that stretch reads KQ.

It belongs to the glycosyl hydrolase 65 family. In terms of assembly, monomer.

It carries out the reaction alpha,alpha-trehalose 6-phosphate + phosphate = beta-D-glucose 1-phosphate + D-glucose 6-phosphate. Functionally, catalyzes the conversion of trehalose 6-phosphate into glucose 1-phosphate and glucose 6-phosphate. The sequence is that of Trehalose 6-phosphate phosphorylase (trePP) from Lactococcus lactis subsp. lactis (strain IL1403) (Streptococcus lactis).